Consider the following 826-residue polypeptide: Zinc phosphodiesterase ELAC protein 2 (826 aa).

The transit peptide at 1–16 (MWALCSLLRSAAGRTM) directs the protein to the mitochondrion. The span at 15 to 24 (TMSQGRTISQ) shows a compositional bias: polar residues. 2 disordered regions span residues 15 to 51 (TMSQ…PSGC) and 189 to 231 (QRRG…VSQR). The segment covering 27 to 38 (ARRERPRKDPLR) has biased composition (basic and acidic residues). Serine 199, serine 208, serine 212, serine 229, serine 618, and serine 736 each carry phosphoserine. Residues 208–224 (SPERSSDSESNENEPHL) show a composition bias toward basic and acidic residues. The interval 798–826 (ELAGGLEDGEPQQKRAHTEEPQAKKVRAQ) is disordered. The span at 808 to 820 (PQQKRAHTEEPQA) shows a compositional bias: basic and acidic residues.

This sequence belongs to the RNase Z family. In terms of assembly, homodimer. Interacts with PTCD1. Requires Zn(2+) as cofactor.

The protein resides in the mitochondrion. Its subcellular location is the mitochondrion matrix. It is found in the mitochondrion nucleoid. It localises to the nucleus. The catalysed reaction is Endonucleolytic cleavage of RNA, removing extra 3' nucleotides from tRNA precursor, generating 3' termini of tRNAs. A 3'-hydroxy group is left at the tRNA terminus and a 5'-phosphoryl group is left at the trailer molecule.. Zinc phosphodiesterase, which displays mitochondrial tRNA 3'-processing endonuclease activity. Involved in tRNA maturation, by removing a 3'-trailer from precursor tRNA. Associates with mitochondrial DNA complexes at the nucleoids to initiate RNA processing and ribosome assembly. This is Zinc phosphodiesterase ELAC protein 2 (ELAC2) from Gorilla gorilla gorilla (Western lowland gorilla).